The primary structure comprises 434 residues: CCA tRNA nucleotidyltransferase 1, mitochondrial (434 aa).

A mitochondrion-targeting transit peptide spans 1–41 (MLRCLYHWHRPVLNRRWSRLCLPKQYLFTMKLQSPEFQSLF). ATP contacts are provided by G64 and R67. CTP contacts are provided by G64 and R67. Residues D77 and D79 each contribute to the Mg(2+) site. R151, D194, R197, R200, and R203 together coordinate ATP. CTP is bound by residues R151, D194, R197, R200, and R203. S400 bears the Phosphoserine mark. An N6-acetyllysine modification is found at K402.

Belongs to the tRNA nucleotidyltransferase/poly(A) polymerase family. Monomer, and homodimer; disulfide-linked. It depends on Mg(2+) as a cofactor.

It localises to the mitochondrion. The protein resides in the cytoplasm. It is found in the nucleus. It carries out the reaction a tRNA precursor + 2 CTP + ATP = a tRNA with a 3' CCA end + 3 diphosphate. The catalysed reaction is a tRNA with a 3' CCA end + 2 CTP + ATP = a tRNA with a 3' CCACCA end + 3 diphosphate. Nucleotidyltransferase that catalyzes the addition and repair of the essential 3'-terminal CCA sequence in tRNAs, which is necessary for the attachment of amino acids to the 3' terminus of tRNA molecules, using CTP and ATP as substrates. tRNA 3'-terminal CCA addition is required both for tRNA processing and repair. Promotes tRNA repair and recycling downstream of the ribosome-associated quality control (RQC) pathway by mediating addition of the tRNA 3'-terminal CCA following cleavage by ANKZF1 and repair by ELAC1. Also involved in tRNA surveillance by mediating tandem CCA addition to generate a CCACCA at the 3' terminus of unstable tRNAs and tRNA-like transcripts. While stable tRNAs receive only 3'-terminal CCA, unstable tRNAs beginning with GG are marked with CCACCA and rapidly degraded. The structural flexibility of RNA controls the choice between CCA versus CCACCA addition: following the first CCA addition cycle, nucleotide-binding to the active site triggers a clockwise screw motion, producing torque on the RNA. This ejects stable RNAs, whereas unstable RNAs are refolded while bound to the enzyme and subjected to a second CCA catalytic cycle. In terms of biological role, adds 2 C residues (CC-) to the 3' terminus of tRNA molecules instead of a complete CCA end as isoform 1 does (in vitro). This is CCA tRNA nucleotidyltransferase 1, mitochondrial from Homo sapiens (Human).